The sequence spans 141 residues: Cholinesterase (141 aa).

Asn39 carries an N-linked (GlcNAc...) asparagine glycan. Residue Gly49–Gly50 coordinates substrate. Catalysis depends on Ser131, which acts as the Acyl-ester intermediate. Phosphoserine is present on Ser131.

Belongs to the type-B carboxylesterase/lipase family. In terms of assembly, homotetramer; disulfide-linked. Dimer of dimers. As to expression, present in most cells except erythrocytes.

The protein resides in the secreted. It carries out the reaction an acylcholine + H2O = a carboxylate + choline + H(+). In terms of biological role, esterase with broad substrate specificity. Contributes to the inactivation of the neurotransmitter acetylcholine. Can degrade neurotoxic organophosphate esters. This chain is Cholinesterase (BCHE), found in Macaca mulatta (Rhesus macaque).